A 634-amino-acid chain; its full sequence is Phosphatase and actin regulator 2 (634 aa).

Disordered stretches follow at residues 1-32, 84-344, 412-471, and 485-508; these read MDNA…KRKG, LPDQ…PLED, PQLL…ALAS, and NRPS…ERQE. Asp2 carries the N-myristoyl glycine lipid modification. Residues 13-26 show a composition bias toward polar residues; that stretch reads IANSDGPTAGSQTP. A Phosphoserine modification is found at Ser16. Thr25 carries the post-translational modification Phosphothreonine. An RPEL 1 repeat occupies 60 to 85; that stretch reads AVLERKISTRQSREELIRRGVLKELP. Composition is skewed to basic and acidic residues over residues 108 to 120 and 137 to 147; these read ESTR…KSEE and EDKKENTENHS. Residues 153 to 162 are compositionally biased toward pro residues; that stretch reads PALPPSAPPK. 2 stretches are compositionally biased toward low complexity: residues 231–247 and 276–290; these read GSKA…SSRP and TSHL…GTSD. Residues 291–304 show a composition bias toward basic and acidic residues; sequence LKGEPAETRVESFK. Residues 324-341 are compositionally biased toward pro residues; that stretch reads VPPPPVAPAPSPLAPPLP. The residue at position 423 (Ser423) is a Phosphoserine. Residues 452-464 show a composition bias toward acidic residues; sequence TDDEDEDEDEDGS. RPEL repeat units lie at residues 477 to 502, 515 to 540, and 553 to 578; these read DTLA…QRTS, TKLV…KQKN, and RRLS…RFNE. The span at 488–508 shows a compositional bias: basic and acidic residues; sequence SKKELEDKNILQRTSEEERQE. Phosphoserine occurs at positions 522 and 560.

This sequence belongs to the phosphatase and actin regulator family. In terms of assembly, binds PPP1CA and actin.

The protein resides in the membrane. The chain is Phosphatase and actin regulator 2 (PHACTR2) from Homo sapiens (Human).